Reading from the N-terminus, the 552-residue chain is Hyaluronan synthase 2 (552 aa).

The Cytoplasmic segment spans residues 1–11 (MHCERFLCILR). The chain crosses the membrane as a helical span at residues 12 to 32 (IIGTTLFGVSLLLGITAAYIV). Residues 33–45 (GYQFIQTDNYYFS) lie on the Extracellular side of the membrane. Residues 46 to 66 (FGLYGAFLASHLIIQSLFAFL) traverse the membrane as a helical segment. The Cytoplasmic segment spans residues 67-374 (EHRKMKKSLE…NAMWFHKHHL (308 aa)). Thr-110 carries the post-translational modification Phosphothreonine. Lys-190 participates in a covalent cross-link: Glycyl lysine isopeptide (Lys-Gly) (interchain with G-Cter in ubiquitin). Ser-221 is a glycosylation site (O-linked (GlcNAc) serine). The residue at position 328 (Thr-328) is a Phosphothreonine. The helical transmembrane segment at 375-395 (WMTYEAVITGFFPFFLIATVI) threads the bilayer. Topologically, residues 396-402 (QLFYRGK) are extracellular. The helical transmembrane segment at 403 to 423 (IWNTLLFLLTVQLVGLIKSSF) threads the bilayer. The Cytoplasmic segment spans residues 424 to 429 (ASCLRG). The chain crosses the membrane as a helical span at residues 430-450 (NIVMVFMSLYSVLYMSSLLPA). Residues 451–475 (KMFAIATINKAGWGTSGRKTIVVNF) lie on the Extracellular side of the membrane. The chain crosses the membrane as a helical span at residues 476–496 (IGLIPVSVWFTILLGGVIFTI). Over 497 to 510 (YKESKKPFSESKQT) the chain is Cytoplasmic. Residues 511–531 (VLIVGTLLYACYWVMLLTLYV) form a helical membrane-spanning segment. Over 532–552 (VLINKCGRRKKGQQYDMVLDV) the chain is Extracellular.

It belongs to the NodC/HAS family. As to quaternary structure, homodimer; dimerization promotes enzymatic activity. Forms heterodimer with HAS3. Forms heterodimer with HAS1. Requires Mg(2+) as cofactor. Phosphorylation at Thr-328 is essential for hyaluronan synthase activity. In terms of processing, O-GlcNAcylation at Ser-221 increases the stability of HAS2 and plasma membrane localization. Post-translationally, ubiquitination at Lys-190; this ubiquitination is essential for hyaluronan synthase activity and homo- or hetero-oligomerization. Can also be poly-ubiquitinated. Deubiquitinated by USP17 and USP4. USP17 efficiently removes 'Lys-63'- and 'Lys-48'-linked polyubiquitin chains, whereas USP4 preferentially removes monoubiquitination and, partially, both 'Lys-63'- and 'Lys-48'-linked polyubiquitin chain. Expressed in corneal endothelial cells.

It is found in the cell membrane. Its subcellular location is the endoplasmic reticulum membrane. The protein localises to the vesicle. The protein resides in the golgi apparatus membrane. It localises to the lysosome. The enzyme catalyses [hyaluronan](n) + UDP-N-acetyl-alpha-D-glucosamine = N-acetyl-beta-D-glucosaminyl-(1-&gt;4)-[hyaluronan](n) + UDP + H(+). It carries out the reaction N-acetyl-beta-D-glucosaminyl-(1-&gt;4)-[hyaluronan](n) + UDP-alpha-D-glucuronate = [hyaluronan](n+1) + UDP + H(+). It participates in glycan biosynthesis; hyaluronan biosynthesis. Its function is as follows. Catalyzes the addition of GlcNAc or GlcUA monosaccharides to the nascent hyaluronan polymer. Therefore, it is essential to hyaluronan synthesis a major component of most extracellular matrices that has a structural role in tissues architectures and regulates cell adhesion, migration and differentiation. This is one of three isoenzymes responsible for cellular hyaluronan synthesis and it is particularly responsible for the synthesis of high molecular mass hyaluronan. The chain is Hyaluronan synthase 2 (HAS2) from Bos taurus (Bovine).